The following is a 274-amino-acid chain: NAD(P)H dehydrogenase [quinone] 1 (274 aa).

Position 2 is an N-acetylalanine (alanine 2). Residues histidine 12, 18-19 (FN), and glutamine 67 each bind FAD. A Phosphoserine modification is found at serine 82. An FAD-binding site is contributed by 104–107 (LYWF). 126 to 128 (AYT) lines the substrate pocket. FAD is bound by residues 148–151 (TTGG), tyrosine 156, and arginine 201. The important for apoenzyme conformational stability stretch occupies residues 225–274 (PSSLFDLNFQAGFLLKKEVQEEQKKNKFGLSVGHHLGKSIPADNQIKARK). Residue lysine 251 forms a Glycyl lysine isopeptide (Lys-Gly) (interchain with G-Cter in SUMO2) linkage.

This sequence belongs to the NAD(P)H dehydrogenase (quinone) family. In terms of assembly, homodimer. Interacts with PDLIM4 isoform 2; this interaction stabilizes PDLIM4 isoform 2 in response to oxidative stress and protects it from ubiquitin-independent degradation by the core 20S proteasome. Interacts with TP73 (via SAM domain); this interaction is NADH-dependent, stabilizes TP73 in response to oxidative stress and protects it from ubiquitin-independent degradation by the 20S proteasome. Interacts with TP53; this interaction is NADH-dependent, stabilizes TP53 in response to oxidative stress and protects it from ubiquitin-independent degradation by the 20S proteasome. Requires FAD as cofactor.

It is found in the cytoplasm. Its subcellular location is the cytosol. It catalyses the reaction a quinone + NADH + H(+) = a quinol + NAD(+). The enzyme catalyses a quinone + NADPH + H(+) = a quinol + NADP(+). It carries out the reaction ubiquinone-10 + NADH + H(+) = ubiquinol-10 + NAD(+). The catalysed reaction is menadione + NADH + H(+) = menadiol + NAD(+). Functionally, flavin-containing quinone reductase that catalyzes two-electron reduction of quinones to hydroquinones using either NADH or NADPH as electron donors. In a ping-pong kinetic mechanism, the electrons are sequentially transferred from NAD(P)H to flavin cofactor and then from reduced flavin to the quinone, bypassing the formation of semiquinone and reactive oxygen species. Regulates cellular redox state primarily through quinone detoxification. Reduces components of plasma membrane redox system such as coenzyme Q and vitamin quinones, producing antioxidant hydroquinone forms. In the process may function as superoxide scavenger to prevent hydroquinone oxidation and facilitate excretion. Alternatively, can activate quinones and their derivatives by generating redox reactive hydroquinones with DNA cross-linking antitumor potential. Acts as a gatekeeper of the core 20S proteasome known to degrade proteins with unstructured regions. Upon oxidative stress, interacts with tumor suppressors TP53 and TP73 in a NADH-dependent way and inhibits their ubiquitin-independent degradation by the 20S proteasome. In Rattus norvegicus (Rat), this protein is NAD(P)H dehydrogenase [quinone] 1 (Nqo1).